Consider the following 385-residue polypeptide: Sesquiterpene alcohol synthase (385 aa).

Positions 123 and 127 each coordinate Mg(2+). Residues 123–127 carry the DDXXD motif motif; it reads DDISD.

This sequence belongs to the terpene synthase family. Mg(2+) is required as a cofactor. Specifically expressed in tissues lining the cuticle of the abdominal sternites of mature males.

It carries out the reaction (2E,6E)-farnesyl diphosphate + H2O = (1S,6S,7R)-sesquipiperitol + diphosphate. Its pathway is pheromone biosynthesis. Sesquiterpene alcohol synthase that catalyzes the formation of (1S,6S,7R)-sesquipiperitol, a terpene intermediate in murgantiol biosynthesis, a male-released aggregation pheromone. The protein is Sesquiterpene alcohol synthase of Murgantia histrionica (Harlequin bug).